Reading from the N-terminus, the 467-residue chain is Putative serine/threonine-protein kinase R400 (467 aa).

A Protein kinase domain is found at Gly-99–Val-467. ATP-binding positions include Ile-105–Thr-113 and Lys-129. Catalysis depends on Asp-272, which acts as the Proton acceptor. The tract at residues Leu-443–Val-467 is disordered. The span at Ser-458 to Val-467 shows a compositional bias: polar residues.

Belongs to the protein kinase superfamily. Ser/Thr protein kinase family.

The protein resides in the virion. The enzyme catalyses L-seryl-[protein] + ATP = O-phospho-L-seryl-[protein] + ADP + H(+). It catalyses the reaction L-threonyl-[protein] + ATP = O-phospho-L-threonyl-[protein] + ADP + H(+). This is Putative serine/threonine-protein kinase R400 from Acanthamoeba polyphaga mimivirus (APMV).